The chain runs to 225 residues: MDNTTNCTLGTEQAVQLFKEYNLFVTAFLLFLTILLQYGYATRNKVIYILKMIVLWCFWPLNIAVGAISCIYPPNTGGLVAAIILTVFACLSFIGYWIQSFRLFKRCRSWWAFNPESNAVGSILLTNGQQCNFAIESVPMVLSPIIKNGVLYCEGQWLAKCEPDHLPKDIFVCTPDRRNIYRMVQRYTGDQSGNKKRFATFIYVKHSVDTGELESVATGGSSLYT.

Topologically, residues 1-20 are virion surface; it reads MDNTTNCTLGTEQAVQLFKE. A helical transmembrane segment spans residues 21–41; it reads YNLFVTAFLLFLTILLQYGYA. Topologically, residues 42 to 51 are intravirion; it reads TRNKVIYILK. A helical membrane pass occupies residues 52–72; it reads MIVLWCFWPLNIAVGAISCIY. Topologically, residues 73 to 77 are virion surface; sequence PPNTG. A helical membrane pass occupies residues 78 to 98; sequence GLVAAIILTVFACLSFIGYWI. Over 99–225 the chain is Intravirion; it reads QSFRLFKRCR…VATGGSSLYT (127 aa).

Belongs to the gammacoronaviruses M protein family. Homomultimer. Interacts with envelope E protein in the budding compartment of the host cell, which is located between endoplasmic reticulum and the Golgi complex. Forms a complex with HE and S proteins. Interacts with nucleocapsid N protein. This interaction probably participates in RNA packaging into the virus.

Its subcellular location is the virion membrane. It is found in the host Golgi apparatus membrane. Its function is as follows. Component of the viral envelope that plays a central role in virus morphogenesis and assembly via its interactions with other viral proteins. The polypeptide is Membrane protein (Avian infectious bronchitis virus (strain 6/82) (IBV)).